The following is a 421-amino-acid chain: 4-hydroxy-3-methylbut-2-en-1-yl diphosphate synthase (flavodoxin) (421 aa).

Positions 298, 301, 344, and 351 each coordinate [4Fe-4S] cluster.

This sequence belongs to the IspG family. Requires [4Fe-4S] cluster as cofactor.

It carries out the reaction (2E)-4-hydroxy-3-methylbut-2-enyl diphosphate + oxidized [flavodoxin] + H2O + 2 H(+) = 2-C-methyl-D-erythritol 2,4-cyclic diphosphate + reduced [flavodoxin]. It functions in the pathway isoprenoid biosynthesis; isopentenyl diphosphate biosynthesis via DXP pathway; isopentenyl diphosphate from 1-deoxy-D-xylulose 5-phosphate: step 5/6. Converts 2C-methyl-D-erythritol 2,4-cyclodiphosphate (ME-2,4cPP) into 1-hydroxy-2-methyl-2-(E)-butenyl 4-diphosphate. This is 4-hydroxy-3-methylbut-2-en-1-yl diphosphate synthase (flavodoxin) from Neisseria gonorrhoeae (strain ATCC 700825 / FA 1090).